We begin with the raw amino-acid sequence, 270 residues long: MVLLKEYRVILPVSVDEYQVGQLYSVAEASKNETGGGEGVEVLVNEPYEKDGERGQYTHKIYHLQSKVPTFVRMLAPEGALNIHEKAWNAYPYCRTVITNEYMKEDFLIKIETWHKPDLGTQENVHKLEPETWKHVEVIYIDIADRSQVLSKDYKAEEDPAKFKSIKTGRGPLGPNWKQELVNQKDCPYMCAYKLVTVKFKWWGLQNKVENFIHKQERRLFTNFHRQLFCWLDKWVDLTMDDIRRMEEETKRQLDEMRQKDPVKGMTADD.

6 residues coordinate a 1,2-diacyl-sn-glycero-3-phospho-(1D-myo-inositol): T58, K60, E85, N89, T96, and K194. K215 is modified (N6-acetyllysine). Basic and acidic residues predominate over residues 250 to 263 (TKRQLDEMRQKDPV). Positions 250–270 (TKRQLDEMRQKDPVKGMTADD) are disordered.

The protein belongs to the PtdIns transfer protein family. PI transfer class I subfamily. Phosphorylated by PKC in a calcium and phosphatidylserine-dependent manner.

The protein localises to the cytoplasm. It localises to the nucleus. It catalyses the reaction a 1,2-diacyl-sn-glycero-3-phosphocholine(in) = a 1,2-diacyl-sn-glycero-3-phosphocholine(out). It carries out the reaction a 1,2-diacyl-sn-glycero-3-phospho-(1D-myo-inositol)(in) = a 1,2-diacyl-sn-glycero-3-phospho-(1D-myo-inositol)(out). In terms of biological role, catalyzes the transfer of phosphatidylinositol (PI) and phosphatidylcholine (PC) between membranes. Shows a preference for PI and PC containing shorter saturated or monosaturated acyl chains at the sn-1 and sn-2 positions. Preference order for PC is C16:1 &gt; C16:0 &gt; C18:1 &gt; C18:0 &gt; C20:4 and for PI is C16:1 &gt; C16:0 &gt; C18:1 &gt; C18:0 &gt; C20:4 &gt; C20:3. This is Phosphatidylinositol transfer protein alpha isoform (PITPNA) from Oryctolagus cuniculus (Rabbit).